Here is a 114-residue protein sequence, read N- to C-terminus: Hydrogenase maturation factor HypA (114 aa).

His-2 provides a ligand contact to Ni(2+). Zn(2+) contacts are provided by Cys-70, Cys-73, Cys-86, and Cys-89.

Belongs to the HypA/HybF family.

In terms of biological role, involved in the maturation of [NiFe] hydrogenases. Required for nickel insertion into the metal center of the hydrogenase. The chain is Hydrogenase maturation factor HypA from Crocosphaera subtropica (strain ATCC 51142 / BH68) (Cyanothece sp. (strain ATCC 51142)).